The chain runs to 100 residues: Aspartyl/glutamyl-tRNA(Asn/Gln) amidotransferase subunit C (100 aa).

It belongs to the GatC family. In terms of assembly, heterotrimer of A, B and C subunits.

The catalysed reaction is L-glutamyl-tRNA(Gln) + L-glutamine + ATP + H2O = L-glutaminyl-tRNA(Gln) + L-glutamate + ADP + phosphate + H(+). The enzyme catalyses L-aspartyl-tRNA(Asn) + L-glutamine + ATP + H2O = L-asparaginyl-tRNA(Asn) + L-glutamate + ADP + phosphate + 2 H(+). Its function is as follows. Allows the formation of correctly charged Asn-tRNA(Asn) or Gln-tRNA(Gln) through the transamidation of misacylated Asp-tRNA(Asn) or Glu-tRNA(Gln) in organisms which lack either or both of asparaginyl-tRNA or glutaminyl-tRNA synthetases. The reaction takes place in the presence of glutamine and ATP through an activated phospho-Asp-tRNA(Asn) or phospho-Glu-tRNA(Gln). The sequence is that of Aspartyl/glutamyl-tRNA(Asn/Gln) amidotransferase subunit C from Dictyoglomus thermophilum (strain ATCC 35947 / DSM 3960 / H-6-12).